The sequence spans 938 residues: Myocardin (938 aa).

An MEF2C-binding motif is present at residues 12–27 (IRRKFRSVLQLRLQQR). RPEL repeat units follow at residues 18–43 (SVLQLRLQQRRTQEQLANQGLIPPLK), 62–87 (DSLRRKVRNRSDRASLVNMHILQAST), and 106–131 (DDLNEKIALRPGPLELVEKNILPMDS). Positions 37–64 (GLIPPLKSPTEFHDPRKKLDSAKTEDSL) are disordered. The span at 46–64 (TEFHDPRKKLDSAKTEDSL) shows a compositional bias: basic and acidic residues. The tract at residues 153 to 205 (FEDDSSRDGLSPDQARSEDPQGSGGSTPDIKSTEAPLAGPLDTIQDLTPGSES) is HDAC5-binding. 2 disordered regions span residues 155 to 282 (DDSS…PPPM) and 339 to 381 (NEQM…PLPP). A compositionally biased stretch (polar residues) spans 210–221 (TASQLSNQSDSG). Positions 248–265 (NRHKKPKDPKPKVKKLKY) are enriched in basic residues. Positions 345–360 (NPNSSSTPLNNTPLSP) are enriched in low complexity. A compositionally biased stretch (polar residues) spans 361–372 (VKNSLSGQTGVS). The SAP domain maps to 383–417 (LDDLKVSELRQQLRIRGLPVSGTKTALVDRLRPFQ). Phosphoserine; by GSK3-beta is present on residues S457, S461, S465, and S469. Residues 501–521 (ESLLSSLNGGSGPSEPDGLDS) are disordered. A coiled-coil region spans residues 522-566 (EKDKMLVEKQKVINQLTWKLRQEQRQVEELRMQLQKQKSGCNDQK). The interval 586-606 (AAQQASGKGQGHSSDSPPPAC) is disordered. Positions 588 to 600 (QQASGKGQGHSSD) are enriched in polar residues. Phosphoserine; by GSK3-beta is present on residues S627, S631, S635, and S639. Composition is skewed to polar residues over residues 667–694 (GAQRENHGVSSPNSSQGCAQMTGLQSSD) and 701–713 (SIPSPTFPKSSPT). A disordered region spans residues 667-734 (GAQRENHGVS…DAVKQQMTRS (68 aa)). The interval 717-938 (ITQPPSYEDA…SPMDLHLQQW (222 aa)) is required for interaction with and ubiquitination by STUB1. A phosphoserine; by MAPK1 and MAPK3 mark is found at S815, S862, and S869. T896 is modified (phosphothreonine; by MAPK1 and MAPK3).

Homodimer. Interacts with MLLT7/FOXO4. Interacts with SRF, its association does not depend on specific DNA sequences for ternary complex formation. Interacts (via C-terminal) with EP300 (via the CREB-binding domain). Interacts with HDAC4 and HDAC5. Interacts with MEF2C. Interacts (via C-terminus) with STUB1/CHIP. Interacts with PURB. Post-translationally, ubiquitinated; by STUB1/CHIP at the C-terminus, leading to its degradation by the proteasome. Phosphorylation by GSK3B is required for STUB1/CHIP-mediated ubiquitination. In terms of processing, phosphorylation negatively regulates transcriptional activity. Phosphorylated; by GSK3B. Abundantly expressed in the heart, aorta media and bladder, weakly expressed in the stomach, intestine and lung.

Its subcellular location is the nucleus. Its function is as follows. Smooth muscle cells (SM) and cardiac muscle cells-specific transcriptional factor which uses the canonical single or multiple CArG boxes DNA sequence. Acts as a cofactor of serum response factor (SRF) with the potential to modulate SRF-target genes. Plays a crucial role in cardiogenesis, urinary bladder development, and differentiation of the smooth muscle cell lineage (myogenesis). Positively regulates the transcription of genes involved in vascular smooth muscle contraction. The protein is Myocardin (Myocd) of Rattus norvegicus (Rat).